The following is a 624-amino-acid chain: ATP-dependent RNA helicase MRH4, mitochondrial (624 aa).

Residues 1 to 43 (MSPVASTCLLCEMRTVVWGWQPAVPQPWHFVRFASSARLARRK) constitute a mitochondrion transit peptide. The segment at 41-120 (RRKPARMALS…KDAADKKQDG (80 aa)) is disordered. A compositionally biased stretch (basic and acidic residues) spans 86–119 (RLPDRPIPRSDAELKRSSSDLNNKEKDAADKKQD). Residues 151–184 (TSFDQFPLLPQVREAVYANAFPTLTEISPTPIQR) carry the Q motif motif. Positions 212-427 (EEELFHFDQF…EKKFPEMKRL (216 aa)) constitute a Helicase ATP-binding domain. 225–232 (AETGTGKT) contacts ATP. The short motif at 374–377 (DEAD) is the DEAD box element. One can recognise a Helicase C-terminal domain in the interval 438–624 (RVQLGVVDVD…EAMFRGQALI (187 aa)).

Belongs to the DEAD box helicase family. MRH4 subfamily.

The protein resides in the mitochondrion. The catalysed reaction is ATP + H2O = ADP + phosphate + H(+). ATP-binding RNA helicase involved in mitochondrial RNA metabolism. Required for maintenance of mitochondrial DNA. This chain is ATP-dependent RNA helicase MRH4, mitochondrial (MRH4), found in Ajellomyces capsulatus (strain NAm1 / WU24) (Darling's disease fungus).